The sequence spans 229 residues: Large ribosomal subunit protein uL1 (229 aa).

This sequence belongs to the universal ribosomal protein uL1 family. As to quaternary structure, part of the 50S ribosomal subunit.

Functionally, binds directly to 23S rRNA. The L1 stalk is quite mobile in the ribosome, and is involved in E site tRNA release. Protein L1 is also a translational repressor protein, it controls the translation of the L11 operon by binding to its mRNA. This chain is Large ribosomal subunit protein uL1, found in Histophilus somni (strain 2336) (Haemophilus somnus).